The following is a 1010-amino-acid chain: Pre-mRNA-splicing factor cwc22 (1010 aa).

The segment covering 1-10 has biased composition (polar residues); the sequence is MASADMSPSR. A disordered region spans residues 1–166; it reads MASADMSPSR…RTPTPPPVAV (166 aa). Positions 18–28 are enriched in low complexity; that stretch reads RSPSPRTQSPS. Composition is skewed to basic and acidic residues over residues 29-39 and 65-78; these read PRDEDGSRSPG and PRRD…DQPH. The segment covering 84 to 109 has biased composition (low complexity); it reads RSPTPRSQSPSRRSVRSPSPRQGSPA. The segment covering 142-158 has biased composition (basic and acidic residues); that stretch reads RHRDAGGDYRPVRKERT. Positions 222 to 405 constitute an MIF4G domain; the sequence is KKSVNGLVNK…EVLFQVRKDK (184 aa). Residues 466-498 form a disordered region; that stretch reads GEASDDDEDDDDDDESESGSESEDEEQKALEIK. Positions 468–491 are enriched in acidic residues; it reads ASDDDEDDDDDDESESGSESEDEE. The 117-residue stretch at 507 to 623 folds into the MI domain; the sequence is NLRRTIYLSI…GWHVFSVIHL (117 aa). The interval 708-1010 is disordered; that stretch reads LPAPPADSDS…SPVAKRGRVD (303 aa). The span at 718–732 shows a compositional bias: low complexity; it reads ESVSSYSSYSSYSSR. Positions 753 to 775 are enriched in basic residues; sequence PPRRGRGRSYSRTPSRSRSRSRS. The segment covering 776 to 787 has biased composition (low complexity); that stretch reads YSRSVSKSVSRS. Basic residues-rich tracts occupy residues 834-846 and 899-910; these read RRGR…RSRS and RLRRGSYSRSRS. Residues 911–935 show a composition bias toward low complexity; that stretch reads RSPIPIRGNGPAGRDTGRAGPAPAR. Over residues 936 to 948 the composition is skewed to basic residues; the sequence is GGRRNRSYSRSRT. Low complexity predominate over residues 961 to 973; it reads SRRVVSRSPSPVV. The segment covering 976–1010 has biased composition (basic residues); sequence NKRRRSYSSSRSRSRSSSRSRYRSRSPVAKRGRVD.

It belongs to the CWC22 family. As to quaternary structure, associated with the spliceosome.

The protein resides in the cytoplasm. It localises to the nucleus. In terms of biological role, involved in pre-mRNA splicing. The polypeptide is Pre-mRNA-splicing factor cwc22 (msp-1) (Neurospora crassa (strain ATCC 24698 / 74-OR23-1A / CBS 708.71 / DSM 1257 / FGSC 987)).